The chain runs to 597 residues: Aspartate--tRNA(Asp/Asn) ligase (597 aa).

Residue glutamate 175 participates in L-aspartate binding. Residues 199–202 (QQYK) form an aspartate region. Arginine 221 and histidine 454 together coordinate L-aspartate. Residue 221-223 (RDE) participates in ATP binding. Position 488 (glutamate 488) interacts with ATP. Arginine 495 lines the L-aspartate pocket. 540-543 (GIDR) is a binding site for ATP.

Belongs to the class-II aminoacyl-tRNA synthetase family. Type 1 subfamily. Homodimer.

It is found in the cytoplasm. The catalysed reaction is tRNA(Asx) + L-aspartate + ATP = L-aspartyl-tRNA(Asx) + AMP + diphosphate. Functionally, aspartyl-tRNA synthetase with relaxed tRNA specificity since it is able to aspartylate not only its cognate tRNA(Asp) but also tRNA(Asn). Reaction proceeds in two steps: L-aspartate is first activated by ATP to form Asp-AMP and then transferred to the acceptor end of tRNA(Asp/Asn). The protein is Aspartate--tRNA(Asp/Asn) ligase of Bartonella tribocorum (strain CIP 105476 / IBS 506).